The primary structure comprises 131 residues: Cystatin-like cysteine protease inhibitor EPIC3 (131 aa).

An N-terminal signal peptide occupies residues 1–22 (MAFTRSIALFAGLALAASSAQG). A glycan (N-linked (GlcNAc...) asparagine) is linked at Asn33. Residues 71–75 (QTVAG) carry the Secondary area of contact motif.

This sequence belongs to the cystatin family.

It is found in the secreted. In terms of biological role, secreted effector that interacts with and inhibits host apoplastic pathogenesis-related papain-like cysteine proteases. Inhibition of host proteases by a pathogen extracellular protease inhibitor forms a specific type of defense-counterdefense mechanism between plants and microbial pathogens. The protein is Cystatin-like cysteine protease inhibitor EPIC3 of Phytophthora infestans (strain T30-4) (Potato late blight agent).